Consider the following 130-residue polypeptide: Gonadotropin subunit beta-1 (130 aa).

The first 18 residues, 1-18, serve as a signal peptide directing secretion; it reads MRMRFVVMVILLPALMMS. Disulfide bonds link Cys-26/Cys-74, Cys-40/Cys-89, Cys-51/Cys-105, Cys-55/Cys-107, and Cys-110/Cys-117. Asn-30 carries an N-linked (GlcNAc...) asparagine glycan.

It belongs to the glycoprotein hormones subunit beta family. In terms of assembly, heterodimer of an alpha and a beta chain.

It localises to the secreted. In terms of biological role, involved in gametogenesis and steroidogenesis. In Carassius auratus (Goldfish), this protein is Gonadotropin subunit beta-1 (cgba).